Reading from the N-terminus, the 75-residue chain is Sec-independent protein translocase protein TatA (75 aa).

Residues 1–21 (MGSFSIWHWLVVLAIVLLVFG) traverse the membrane as a helical segment. The disordered stretch occupies residues 41–75 (KGMRDEDKPNAQLGDESRTQDASRTAQDEHDRNAR).

This sequence belongs to the TatA/E family. In terms of assembly, the Tat system comprises two distinct complexes: a TatABC complex, containing multiple copies of TatA, TatB and TatC subunits, and a separate TatA complex, containing only TatA subunits. Substrates initially bind to the TatABC complex, which probably triggers association of the separate TatA complex to form the active translocon.

The protein localises to the cell inner membrane. In terms of biological role, part of the twin-arginine translocation (Tat) system that transports large folded proteins containing a characteristic twin-arginine motif in their signal peptide across membranes. TatA could form the protein-conducting channel of the Tat system. This chain is Sec-independent protein translocase protein TatA, found in Stenotrophomonas maltophilia (strain K279a).